The sequence spans 62 residues: Conotoxin Lt5.5 (62 aa).

The signal sequence occupies residues 1 to 22 (MRCLQVFIIFLLLIPSPPSVDA). Residues 23 to 48 (QRKTKDDVPLASFHDNAKRTLKRLWN) constitute a propeptide that is removed on maturation.

Belongs to the conotoxin T superfamily. Contains 2 disulfide bonds that can be either 'C1-C3, C2-C4' or 'C1-C4, C2-C3', since these disulfide connectivities have been observed for conotoxins with cysteine framework V (for examples, see AC P0DQQ7 and AC P81755). In terms of tissue distribution, expressed by the venom duct.

Its subcellular location is the secreted. This Conus litteratus (Lettered cone) protein is Conotoxin Lt5.5.